A 122-amino-acid polypeptide reads, in one-letter code: Large ribosomal subunit protein uL14c (122 aa).

The protein belongs to the universal ribosomal protein uL14 family. Part of the 50S ribosomal subunit.

Its subcellular location is the plastid. The protein resides in the chloroplast. Binds to 23S rRNA. The chain is Large ribosomal subunit protein uL14c from Populus alba (White poplar).